A 217-amino-acid polypeptide reads, in one-letter code: Germin-like protein subfamily 1 member 1 (217 aa).

Residues methionine 1 to serine 18 form the signal peptide. Cysteine 27 and cysteine 45 are joined by a disulfide. A Cupin type-1 domain is found at serine 59–alanine 209. A glycan (N-linked (GlcNAc...) asparagine) is linked at asparagine 75. Residues histidine 108, histidine 110, glutamate 115, and histidine 154 each coordinate Mn(2+).

It belongs to the germin family. Oligomer (believed to be a pentamer but probably hexamer).

The protein resides in the secreted. Its subcellular location is the extracellular space. It is found in the apoplast. Its function is as follows. May play a role in plant defense. Probably has no oxalate oxidase activity even if the active site is conserved. The sequence is that of Germin-like protein subfamily 1 member 1 (GLP7) from Arabidopsis thaliana (Mouse-ear cress).